The chain runs to 302 residues: Arginase (302 aa).

Positions 103, 126, 128, and 130 each coordinate Mn(2+). Substrate contacts are provided by residues 128 to 132 (HGDLN), 139 to 141 (SGN), and Asp180. Mn(2+) contacts are provided by Asp229 and Asp231. Thr243 and Glu274 together coordinate substrate.

Belongs to the arginase family. Mn(2+) is required as a cofactor.

It catalyses the reaction L-arginine + H2O = urea + L-ornithine. The protein operates within nitrogen metabolism; urea cycle; L-ornithine and urea from L-arginine: step 1/1. The chain is Arginase (arg) from Staphylococcus aureus (strain MSSA476).